The following is a 716-amino-acid chain: 1,4-alpha-glucan branching enzyme GlgB (716 aa).

Aspartate 398 functions as the Nucleophile in the catalytic mechanism. The Proton donor role is filled by glutamate 451.

Belongs to the glycosyl hydrolase 13 family. GlgB subfamily. In terms of assembly, monomer.

The catalysed reaction is Transfers a segment of a (1-&gt;4)-alpha-D-glucan chain to a primary hydroxy group in a similar glucan chain.. The protein operates within glycan biosynthesis; glycogen biosynthesis. Functionally, catalyzes the formation of the alpha-1,6-glucosidic linkages in glycogen by scission of a 1,4-alpha-linked oligosaccharide from growing alpha-1,4-glucan chains and the subsequent attachment of the oligosaccharide to the alpha-1,6 position. This Nitrobacter winogradskyi (strain ATCC 25391 / DSM 10237 / CIP 104748 / NCIMB 11846 / Nb-255) protein is 1,4-alpha-glucan branching enzyme GlgB.